Consider the following 436-residue polypeptide: UPF0597 protein YhaM (436 aa).

The protein belongs to the UPF0597 family.

This Salmonella heidelberg (strain SL476) protein is UPF0597 protein YhaM.